The following is a 602-amino-acid chain: Chaperone protein dnaK (602 aa).

Belongs to the heat shock protein 70 family.

The protein localises to the plastid. It localises to the chloroplast. Acts as a chaperone. The polypeptide is Chaperone protein dnaK (Thalassiosira pseudonana (Marine diatom)).